A 737-amino-acid chain; its full sequence is Elongation factor 2 (737 aa).

The 245-residue stretch at 18-262 (TRVRNIGIIA…AVIKFVPNPR (245 aa)) folds into the tr-type G domain. Residues 27–34 (AHVDHGKT), 93–97 (DTPGH), and 147–150 (NKVD) contribute to the GTP site. Position 604 is a diphthamide (H604).

The protein belongs to the TRAFAC class translation factor GTPase superfamily. Classic translation factor GTPase family. EF-G/EF-2 subfamily.

It is found in the cytoplasm. In terms of biological role, catalyzes the GTP-dependent ribosomal translocation step during translation elongation. During this step, the ribosome changes from the pre-translocational (PRE) to the post-translocational (POST) state as the newly formed A-site-bound peptidyl-tRNA and P-site-bound deacylated tRNA move to the P and E sites, respectively. Catalyzes the coordinated movement of the two tRNA molecules, the mRNA and conformational changes in the ribosome. The sequence is that of Elongation factor 2 (fusA) from Sulfolobus acidocaldarius (strain ATCC 33909 / DSM 639 / JCM 8929 / NBRC 15157 / NCIMB 11770).